Here is an 823-residue protein sequence, read N- to C-terminus: Putative ankyrin repeat domain-containing protein 20A4 (823 aa).

ANK repeat units follow at residues 66–95, 99–128, 132–161, 165–194, and 198–227; these read QHRTALHLACASGHVQVVTLLVNRKCQIDV, ENRTPLIQAVHCQEEACAVILLEHGANPNL, YGNTALHYAVYSESTSLAEKLLSHGAHIEA, DNNTPLLFAIICKKEKMVEFLLKKKASSHA, and LRRSALMLAVYYDSPGIVNILLKQNIDVFA. 2 disordered regions span residues 301–343 and 356–405; these read VPEK…EVED and QTLR…NICD. A compositionally biased stretch (basic and acidic residues) spans 371-384; sequence EQQRHERSEKKQPQ. Coiled-coil stretches lie at residues 431-480, 565-724, and 776-806; these read KKLK…KQLE, EMIT…NNST, and FVLEEKSKKLMNECDHLKESLFQYEREKTEV.

This is Putative ankyrin repeat domain-containing protein 20A4 from Homo sapiens (Human).